Consider the following 103-residue polypeptide: Small ribosomal subunit protein uS10 (103 aa).

It belongs to the universal ribosomal protein uS10 family. As to quaternary structure, part of the 30S ribosomal subunit.

Functionally, involved in the binding of tRNA to the ribosomes. The chain is Small ribosomal subunit protein uS10 from Alkalilimnicola ehrlichii (strain ATCC BAA-1101 / DSM 17681 / MLHE-1).